The chain runs to 338 residues: Ketol-acid reductoisomerase (NADP(+)) (338 aa).

One can recognise a KARI N-terminal Rossmann domain in the interval 1-181 (MKVFYDKDCD…GGGRAGIIET (181 aa)). Residues 24–27 (YGSQ), Arg47, and Ser52 contribute to the NADP(+) site. His107 is an active-site residue. Gly133 contributes to the NADP(+) binding site. In terms of domain architecture, KARI C-terminal knotted spans 182–327 (NFREETETDL…AKLRAMMPWI (146 aa)). Positions 190, 194, 226, and 230 each coordinate Mg(2+). Substrate is bound at residue Ser251.

The protein belongs to the ketol-acid reductoisomerase family. It depends on Mg(2+) as a cofactor.

It carries out the reaction (2R)-2,3-dihydroxy-3-methylbutanoate + NADP(+) = (2S)-2-acetolactate + NADPH + H(+). The catalysed reaction is (2R,3R)-2,3-dihydroxy-3-methylpentanoate + NADP(+) = (S)-2-ethyl-2-hydroxy-3-oxobutanoate + NADPH + H(+). It functions in the pathway amino-acid biosynthesis; L-isoleucine biosynthesis; L-isoleucine from 2-oxobutanoate: step 2/4. The protein operates within amino-acid biosynthesis; L-valine biosynthesis; L-valine from pyruvate: step 2/4. Functionally, involved in the biosynthesis of branched-chain amino acids (BCAA). Catalyzes an alkyl-migration followed by a ketol-acid reduction of (S)-2-acetolactate (S2AL) to yield (R)-2,3-dihydroxy-isovalerate. In the isomerase reaction, S2AL is rearranged via a Mg-dependent methyl migration to produce 3-hydroxy-3-methyl-2-ketobutyrate (HMKB). In the reductase reaction, this 2-ketoacid undergoes a metal-dependent reduction by NADPH to yield (R)-2,3-dihydroxy-isovalerate. The protein is Ketol-acid reductoisomerase (NADP(+)) of Janthinobacterium sp. (strain Marseille) (Minibacterium massiliensis).